Consider the following 597-residue polypeptide: Aspartate--tRNA(Asp/Asn) ligase (597 aa).

Position 175 (Glu-175) interacts with L-aspartate. Positions 199–202 (QQYK) are aspartate. L-aspartate-binding residues include Arg-221 and His-454. ATP is bound at residue 221–223 (RDE). An ATP-binding site is contributed by Glu-488. Arg-495 provides a ligand contact to L-aspartate. 540-543 (GIDR) is a binding site for ATP.

The protein belongs to the class-II aminoacyl-tRNA synthetase family. Type 1 subfamily. In terms of assembly, homodimer.

The protein localises to the cytoplasm. The catalysed reaction is tRNA(Asx) + L-aspartate + ATP = L-aspartyl-tRNA(Asx) + AMP + diphosphate. Aspartyl-tRNA synthetase with relaxed tRNA specificity since it is able to aspartylate not only its cognate tRNA(Asp) but also tRNA(Asn). Reaction proceeds in two steps: L-aspartate is first activated by ATP to form Asp-AMP and then transferred to the acceptor end of tRNA(Asp/Asn). This is Aspartate--tRNA(Asp/Asn) ligase from Bartonella tribocorum (strain CIP 105476 / IBS 506).